The primary structure comprises 393 residues: Staphopain B (393 aa).

The first 36 residues, 1-36 (MNSSYKSRVFNIISIIMVSMLILSLGAFANNNKAKA), serve as a signal peptide directing secretion. Residues 37–219 (DSHSKQLEIN…KVEENEAIQE (183 aa)) constitute a propeptide that is removed on maturation. Catalysis depends on residues Cys243, His340, and Asn360.

It belongs to the peptidase C47 family. In the cytoplasm, prematurely activated/folded SspB forms a stable non-covalent complex with SspC. Proteolytically cleaved by staphylococcal serine protease (SspA).

The protein resides in the secreted. With respect to regulation, prematurely activated/folded staphopain B is inhibited by staphostatin B (SspC), which is probably required to protect staphylococcal cytoplasmic proteins from degradation by SspB. Its function is as follows. Cysteine protease that plays an important role in the inhibition of host innate immune response. Degrades host elastin, fibrogen, fibronectin and kininogen. Blocks phagocytosis of opsonised S.aureus by neutrophils and monocytes by inducing their death in a proteolytic activity-dependent manner. Decreases surface expression of the 'don't eat me' signal CD31 on neutrophils. Cleaves host galectin-3/LGALS3, thereby inhibiting the neutrophil-activating ability of the lectin. The protein is Staphopain B (sspB) of Staphylococcus aureus (strain Mu50 / ATCC 700699).